The following is a 331-amino-acid chain: Hyaluronidase A (331 aa).

2 cysteine pairs are disulfide-bonded: Cys19–Cys308 and Cys185–Cys197. Asn79 and Asn99 each carry an N-linked (GlcNAc...) asparagine glycan. Glu109 serves as the catalytic Proton donor. Asn127 carries an N-linked (GlcNAc...) asparagine glycan. N-linked (GlcNAc...) asparagine glycosylation is present at Asn325.

It belongs to the glycosyl hydrolase 56 family. Expressed by the venom gland.

It localises to the secreted. It carries out the reaction Random hydrolysis of (1-&gt;4)-linkages between N-acetyl-beta-D-glucosamine and D-glucuronate residues in hyaluronate.. Functionally, hydrolyzes high molecular weight hyaluronic acid to produce small oligosaccharides. This is Hyaluronidase A from Vespula vulgaris (Yellow jacket).